The sequence spans 1175 residues: DNA-directed RNA polymerase subunit beta (1175 aa).

The tract at residues 1142 to 1175 (PMELSGSDDDEFDQAGASLGINLSRDERSDADIA) is disordered. Over residues 1165-1175 (SRDERSDADIA) the composition is skewed to basic and acidic residues.

The protein belongs to the RNA polymerase beta chain family. In terms of assembly, the RNAP catalytic core consists of 2 alpha, 1 beta, 1 beta' and 1 omega subunit. When a sigma factor is associated with the core the holoenzyme is formed, which can initiate transcription.

The catalysed reaction is RNA(n) + a ribonucleoside 5'-triphosphate = RNA(n+1) + diphosphate. Its function is as follows. DNA-dependent RNA polymerase catalyzes the transcription of DNA into RNA using the four ribonucleoside triphosphates as substrates. The sequence is that of DNA-directed RNA polymerase subunit beta from Corynebacterium diphtheriae (strain ATCC 700971 / NCTC 13129 / Biotype gravis).